Consider the following 206-residue polypeptide: Ras-related protein RABG3d (206 aa).

GTP is bound at residue 15-22 (GDSGVGKT). An Effector region motif is present at residues 37 to 45 (YKATIGADF). GTP contacts are provided by residues 63–67 (DTAGQ), 125–128 (NKTD), and 158–159 (SA). S-geranylgeranyl cysteine attachment occurs at residues Cys204 and Cys206. Cys206 carries the cysteine methyl ester modification.

The protein belongs to the small GTPase superfamily. Rab family.

It localises to the cell membrane. Functionally, intracellular vesicle trafficking and protein transport. The polypeptide is Ras-related protein RABG3d (RABG3D) (Arabidopsis thaliana (Mouse-ear cress)).